Here is a 213-residue protein sequence, read N- to C-terminus: Proteasome subunit beta (213 aa).

Positions 1 to 11 are cleaved as a propeptide — removed in mature form; by autocatalysis; that stretch reads MSMIEEKIYKG. Catalysis depends on Thr-12, which acts as the Nucleophile.

This sequence belongs to the peptidase T1B family. As to quaternary structure, the 20S proteasome core is composed of 14 alpha and 14 beta subunits that assemble into four stacked heptameric rings, resulting in a barrel-shaped structure. The two inner rings, each composed of seven catalytic beta subunits, are sandwiched by two outer rings, each composed of seven alpha subunits. The catalytic chamber with the active sites is on the inside of the barrel. Has probably a gated structure, the ends of the cylinder being occluded by the N-termini of the alpha-subunits. Is likely capped at one or both ends by the proteasome regulatory ATPase, PAN.

The protein resides in the cytoplasm. It catalyses the reaction Cleavage of peptide bonds with very broad specificity.. With respect to regulation, the formation of the proteasomal ATPase PAN-20S proteasome complex, via the docking of the C-termini of PAN into the intersubunit pockets in the alpha-rings, triggers opening of the gate for substrate entry. Interconversion between the open-gate and close-gate conformations leads to a dynamic regulation of the 20S proteasome proteolysis activity. Functionally, component of the proteasome core, a large protease complex with broad specificity involved in protein degradation. This chain is Proteasome subunit beta, found in Archaeoglobus fulgidus (strain ATCC 49558 / DSM 4304 / JCM 9628 / NBRC 100126 / VC-16).